The chain runs to 1127 residues: DGKPGLPGPAGPPGPPGLGGNFAAQYDGVKAPDPGPGPMGMMGARGPPGPPGPPGAQGHTGHPGEPGEPGQTGPVGPRGPPGPPGKSGEDGNNGRPGKPGDRGAPGPQGARGFPGTPGLPGMKGHRGYTGLDGRKGEPGGAGAKGEPGAHGAAGSPGLAGSRGMPGERGRAGPAGPAGARGPAGPLGAAGPPGFPGGPGPKGELGPAGATGPSGAQGSRGEPGPNGAVGPVGPPGNPGNNGLNGAKGAAGTPGVAGAPGFPGPRGGPGPQGPQGAAGQRGLAGDPGTQGVKGDGGPKGEPGNSGPQGPPGPQGEEGKRGPTGELGATGPAGNRGARGAPGSRGMPGSEGRGASGAAGPRGPPGDAGRAGESGPAGLRGLPGSPGSSGPPGKEGAAGPAGQDGRGGPPGPTGPRGPSGEAGKPGDKGATGPTGLRGAPGPDGNNGATGATGPAGGPGEKGEQGAAGAPGFQGLPGPAGGAGEAGKPGDRGLPGDQGVSGPAGAKGERGNPGAAGASGPQGPLGPRGPAGAPGTDGGKGEPGAAGAAGGPGHQGPGGMPGERGAAGGPGGKGEKGEAGHRGPDGNAGRDGSRGMPGPAGPPGPTGANGDKGESGSFGPAGPAGARGASGERGEVGPAGAPGFAGPPGADGQTGARGERGPSGGKGESGPSGPAGPAGQSGPPGASGPAGPTGARGDNGPPGLTGFPGAAGRVGAAGPAGLVGPPGSAGPAGKDGPRGLRGDPGPSGPSGDQGMVGPPGPSGEKGPSGEPGTPGTSGPLGLQGFVGLPGARGDRGSPGGAGAVGEAGRVGPAGPAGARGAPGNLGLPGMTGPQGEAGREGNPGNDGPPGRPGAPGFKGDRGEPGSSGAMGLAGAPGPAGPSGGAGRPGNRGESGPGGAAGAVGPAGARGAAGPSGPRGEKGVAGEKGERGMKGLRGHAGLQGMPGPSGPSGDTGSAGPNGPAGPRGPAGPHGPPGKDGRAGGHGTLGSPGARGPPGYVGPAGPPGXPGLPGPAGPAGGGYDVSGYDEYRAAKDYEVDATLKSLNTQLENLLTPEGSRKETCLHAHPGSLARAVVVQGSNDVELRFTFSVLEDGCTRTNKPSRLPLLDLAPLDLGGADQEFGLDLGPVCFK.

Residues 1–16 (DGKPGLPGPAGPPGPP) are compositionally biased toward pro residues. The interval 1-1017 (DGKPGLPGPA…GPAGPAGGGY (1017 aa)) is disordered. Composition is skewed to low complexity over residues 171 to 191 (AGPAGPAGARGPAGPLGAAGP), 221 to 230 (EPGPNGAVGP), and 237 to 258 (PGNNGLNGAKGAAGTPGVAGAP). Residues 260 to 270 (FPGPRGGPGPQ) show a composition bias toward pro residues. The segment covering 272–282 (PQGAAGQRGLA) has biased composition (low complexity). Residues 289-298 (GVKGDGGPKG) show a composition bias toward gly residues. Composition is skewed to low complexity over residues 326–345 (ATGPAGNRGARGAPGSRGMP), 355–398 (AAGP…AGPA), 436–449 (APGPDGNNGATGAT), and 461–473 (QGAAGAPGFQGLP). The segment covering 474–483 (GPAGGAGEAG) has biased composition (gly residues). The segment covering 508 to 518 (NPGAAGASGPQ) has biased composition (low complexity). Residues 531-568 (GTDGGKGEPGAAGAAGGPGHQGPGGMPGERGAAGGPGG) show a composition bias toward gly residues. The span at 569–580 (KGEKGEAGHRGP) shows a compositional bias: basic and acidic residues. Low complexity-rich tracts occupy residues 611–625 (SGSFGPAGPAGARGA) and 634–647 (PAGAPGFAGPPGAD). The span at 657 to 666 (GPSGGKGESG) shows a compositional bias: gly residues. Composition is skewed to low complexity over residues 667–692 (PSGPAGPAGQSGPPGASGPAGPTGAR), 703–730 (FPGAAGRVGAAGPAGLVGPPGSAGPAGK), and 758–778 (SGEKGPSGEPGTPGTSGPLGL). Gly residues predominate over residues 792 to 801 (GSPGGAGAVG). 2 stretches are compositionally biased toward low complexity: residues 802–824 (EAGRVGPAGPAGARGAPGNLGLP) and 860–872 (PGSSGAMGLAGAP). Residues 876–897 (GPSGGAGRPGNRGESGPGGAAG) show a composition bias toward gly residues. A compositionally biased stretch (low complexity) spans 898 to 913 (AVGPAGARGAAGPSGP). The segment covering 914 to 928 (RGEKGVAGEKGERGM) has biased composition (basic and acidic residues). 2 stretches are compositionally biased toward low complexity: residues 937 to 956 (LQGMPGPSGPSGDTGSAGPN) and 986 to 997 (PGARGPPGYVGP). The segment covering 998-1010 (AGPPGXPGLPGPA) has biased composition (pro residues). The 35-residue stretch at 1093–1127 (RTNKPSRLPLLDLAPLDLGGADQEFGLDLGPVCFK) folds into the Fibrillar collagen NC1 domain.

Belongs to the fibrillar collagen family.

It is found in the secreted. Its subcellular location is the extracellular space. The protein localises to the extracellular matrix. This chain is Collagen alpha-2(I) chain, found in Epinephelus marginatus (Dusky grouper).